A 428-amino-acid polypeptide reads, in one-letter code: Histone-lysine N-methyltransferase SMYD3 (428 aa).

Position 1 is an N-acetylmethionine (M1). In terms of domain architecture, SET spans 4–240 (LKVEKFATAK…VGEELTICYL (237 aa)). 14–16 (RGN) serves as a coordination point for S-adenosyl-L-methionine. At T22 the chain carries Phosphothreonine. Residues C49, C52, C62, C65, C71, C75, H83, and C87 each coordinate Zn(2+). The segment at 49 to 87 (CDRCLLGKEKLMRCSQCRVAKYCSAKCQKKAWPDHKREC) adopts an MYND-type zinc-finger fold. S-adenosyl-L-methionine contacts are provided by residues Y124, N132, N181, 205–206 (NH), Y239, and F259. The tract at residues 272–428 (DADMLTGDEQ…EECDANIRAS (157 aa)) is C-terminal domain; essential for histone methyltransferase activity, nuclear localization and mediates interaction with HSP90AA1.

Belongs to the class V-like SAM-binding methyltransferase superfamily. Histone-lysine methyltransferase family. In terms of assembly, interacts with HSPCA. Interacts with HELZ. Interacts with POLR2A; the interaction may be indirect and may be mediated by HELZ. Interacts with HSP90AA1; this interaction enhances SMYD3 histone-lysine N-methyltransferase. Expressed in skeletal muscles and testis. Overexpressed in a majority of colorectal and hepatocellular carcinomas.

It localises to the cytoplasm. It is found in the nucleus. It catalyses the reaction L-lysyl(4)-[histone H3] + 3 S-adenosyl-L-methionine = N(6),N(6),N(6)-trimethyl-L-lysyl(4)-[histone H3] + 3 S-adenosyl-L-homocysteine + 3 H(+). With respect to regulation, histone methyltransferase activity strongly stimulated by HSPCA. Functionally, histone methyltransferase. Specifically methylates 'Lys-4' of histone H3, inducing di- and tri-methylation, but not monomethylation. Also methylates 'Lys-5' of histone H4. Plays an important role in transcriptional activation as a member of an RNA polymerase complex. Binds DNA containing 5'-CCCTCC-3' or 5'-GAGGGG-3' sequences. The polypeptide is Histone-lysine N-methyltransferase SMYD3 (SMYD3) (Homo sapiens (Human)).